The sequence spans 167 residues: NAD(P)H-quinone oxidoreductase subunit I, chloroplastic (167 aa).

2 consecutive 4Fe-4S ferredoxin-type domains span residues 55–84 (GRIH…VDWK) and 95–124 (LNYS…MTEE). [4Fe-4S] cluster contacts are provided by Cys64, Cys67, Cys70, Cys74, Cys104, Cys107, Cys110, and Cys114.

Belongs to the complex I 23 kDa subunit family. As to quaternary structure, NDH is composed of at least 16 different subunits, 5 of which are encoded in the nucleus. The cofactor is [4Fe-4S] cluster.

The protein resides in the plastid. It is found in the chloroplast thylakoid membrane. It carries out the reaction a plastoquinone + NADH + (n+1) H(+)(in) = a plastoquinol + NAD(+) + n H(+)(out). The catalysed reaction is a plastoquinone + NADPH + (n+1) H(+)(in) = a plastoquinol + NADP(+) + n H(+)(out). In terms of biological role, NDH shuttles electrons from NAD(P)H:plastoquinone, via FMN and iron-sulfur (Fe-S) centers, to quinones in the photosynthetic chain and possibly in a chloroplast respiratory chain. The immediate electron acceptor for the enzyme in this species is believed to be plastoquinone. Couples the redox reaction to proton translocation, and thus conserves the redox energy in a proton gradient. The sequence is that of NAD(P)H-quinone oxidoreductase subunit I, chloroplastic from Jasminum nudiflorum (Winter jasmine).